A 397-amino-acid chain; its full sequence is Serpin B10 (397 aa).

The short motif at 74 to 77 is the Nuclear localization signal element; sequence KKRK.

Belongs to the serpin family. Ov-serpin subfamily. Expressed in many tissues, including brain, heart, kidney, liver, lung, prostate, skin, spleen and stomach.

The protein localises to the nucleus. The protein resides in the cytoplasm. Its function is as follows. Protease inhibitor that may play a role in the regulation of protease activities during hematopoiesis and apoptosis induced by TNF. May regulate protease activities in the cytoplasm and in the nucleus. Inhibits plasmin. In Rattus norvegicus (Rat), this protein is Serpin B10 (Serpinb10).